The following is a 340-amino-acid chain: Cobalt-precorrin-5B C(1)-methyltransferase (340 aa).

The protein belongs to the CbiD family.

The enzyme catalyses Co-precorrin-5B + S-adenosyl-L-methionine = Co-precorrin-6A + S-adenosyl-L-homocysteine. It functions in the pathway cofactor biosynthesis; adenosylcobalamin biosynthesis; cob(II)yrinate a,c-diamide from sirohydrochlorin (anaerobic route): step 6/10. In terms of biological role, catalyzes the methylation of C-1 in cobalt-precorrin-5B to form cobalt-precorrin-6A. This is Cobalt-precorrin-5B C(1)-methyltransferase from Pyrobaculum aerophilum (strain ATCC 51768 / DSM 7523 / JCM 9630 / CIP 104966 / NBRC 100827 / IM2).